Consider the following 474-residue polypeptide: Receptor-transporting protein 3 (474 aa).

At 1–453 the chain is on the cytoplasmic side; sequence MMEEDIGDTE…SCCEAACNCM (453 aa). The 3CxxC-type zinc-finger motif lies at 53-164; sequence TFARFHCPSC…SSNCEACLLG (112 aa). Positions 175–304 are disordered; the sequence is SKPPAPPLSP…ISCTSKPSTT (130 aa). 2 stretches are compositionally biased toward polar residues: residues 197–228 and 259–304; these read VTCS…NPTK and VTCS…PSTT. Residues 454 to 474 traverse the membrane as a helical segment; that stretch reads SQSPLCCLAFLILFLLLWYLL.

The protein belongs to the TMEM7 family. In terms of assembly, interacts with TAS2R16. As to expression, expressed predominantly in the liver. Not detected in the olfactory epithelium.

Its subcellular location is the membrane. Functionally, promotes functional cell surface expression of the bitter taste receptors TAS2R16 and TAS2R43. This is Receptor-transporting protein 3 (Rtp3) from Mus musculus (Mouse).